A 319-amino-acid chain; its full sequence is 4-hydroxy-3-methylbut-2-enyl diphosphate reductase (319 aa).

Cys-18 serves as a coordination point for [4Fe-4S] cluster. (2E)-4-hydroxy-3-methylbut-2-enyl diphosphate-binding residues include His-47 and His-81. Dimethylallyl diphosphate is bound by residues His-47 and His-81. Residues His-47 and His-81 each coordinate isopentenyl diphosphate. A [4Fe-4S] cluster-binding site is contributed by Cys-103. His-131 lines the (2E)-4-hydroxy-3-methylbut-2-enyl diphosphate pocket. His-131 serves as a coordination point for dimethylallyl diphosphate. His-131 lines the isopentenyl diphosphate pocket. Residue Glu-133 is the Proton donor of the active site. Thr-172 provides a ligand contact to (2E)-4-hydroxy-3-methylbut-2-enyl diphosphate. Cys-202 is a binding site for [4Fe-4S] cluster. Ser-230, Ser-231, Asn-232, and Ser-275 together coordinate (2E)-4-hydroxy-3-methylbut-2-enyl diphosphate. Dimethylallyl diphosphate is bound by residues Ser-230, Ser-231, Asn-232, and Ser-275. The isopentenyl diphosphate site is built by Ser-230, Ser-231, Asn-232, and Ser-275.

Belongs to the IspH family. [4Fe-4S] cluster serves as cofactor.

It catalyses the reaction isopentenyl diphosphate + 2 oxidized [2Fe-2S]-[ferredoxin] + H2O = (2E)-4-hydroxy-3-methylbut-2-enyl diphosphate + 2 reduced [2Fe-2S]-[ferredoxin] + 2 H(+). The enzyme catalyses dimethylallyl diphosphate + 2 oxidized [2Fe-2S]-[ferredoxin] + H2O = (2E)-4-hydroxy-3-methylbut-2-enyl diphosphate + 2 reduced [2Fe-2S]-[ferredoxin] + 2 H(+). The protein operates within isoprenoid biosynthesis; dimethylallyl diphosphate biosynthesis; dimethylallyl diphosphate from (2E)-4-hydroxy-3-methylbutenyl diphosphate: step 1/1. It functions in the pathway isoprenoid biosynthesis; isopentenyl diphosphate biosynthesis via DXP pathway; isopentenyl diphosphate from 1-deoxy-D-xylulose 5-phosphate: step 6/6. Its function is as follows. Catalyzes the conversion of 1-hydroxy-2-methyl-2-(E)-butenyl 4-diphosphate (HMBPP) into a mixture of isopentenyl diphosphate (IPP) and dimethylallyl diphosphate (DMAPP). Acts in the terminal step of the DOXP/MEP pathway for isoprenoid precursor biosynthesis. This Beijerinckia indica subsp. indica (strain ATCC 9039 / DSM 1715 / NCIMB 8712) protein is 4-hydroxy-3-methylbut-2-enyl diphosphate reductase.